Consider the following 684-residue polypeptide: Acetyl-coenzyme A synthetase 2 (684 aa).

Residues Arg-207 to Lys-210 and Thr-326 contribute to the CoA site. Residues Gly-402–Pro-404, Asp-426–Thr-431, Asp-517, and Arg-532 contribute to the ATP site. Ser-540 is a CoA binding site. Arg-543 is a binding site for ATP. CoA is bound at residue Arg-613.

Belongs to the ATP-dependent AMP-binding enzyme family.

The catalysed reaction is acetate + ATP + CoA = acetyl-CoA + AMP + diphosphate. This Kluyveromyces lactis (strain ATCC 8585 / CBS 2359 / DSM 70799 / NBRC 1267 / NRRL Y-1140 / WM37) (Yeast) protein is Acetyl-coenzyme A synthetase 2 (ACS2).